The primary structure comprises 185 residues: Ribosome-recycling factor (185 aa).

It belongs to the RRF family.

Its subcellular location is the cytoplasm. Its function is as follows. Responsible for the release of ribosomes from messenger RNA at the termination of protein biosynthesis. May increase the efficiency of translation by recycling ribosomes from one round of translation to another. This Syntrophus aciditrophicus (strain SB) protein is Ribosome-recycling factor.